Here is a 338-residue protein sequence, read N- to C-terminus: tRNA N6-adenosine threonylcarbamoyltransferase (338 aa).

Fe cation contacts are provided by H111 and H115. Substrate contacts are provided by residues 134–138 (LVSGG), D167, G180, and N272. D300 is a Fe cation binding site.

It belongs to the KAE1 / TsaD family. The cofactor is Fe(2+).

It localises to the cytoplasm. The enzyme catalyses L-threonylcarbamoyladenylate + adenosine(37) in tRNA = N(6)-L-threonylcarbamoyladenosine(37) in tRNA + AMP + H(+). Functionally, required for the formation of a threonylcarbamoyl group on adenosine at position 37 (t(6)A37) in tRNAs that read codons beginning with adenine. Is involved in the transfer of the threonylcarbamoyl moiety of threonylcarbamoyl-AMP (TC-AMP) to the N6 group of A37, together with TsaE and TsaB. TsaD likely plays a direct catalytic role in this reaction. This Shewanella baltica (strain OS223) protein is tRNA N6-adenosine threonylcarbamoyltransferase.